Reading from the N-terminus, the 147-residue chain is Ubiquitin-conjugating enzyme E2 D2 (147 aa).

Residues 1-147 (MALKRIHKEL…SREWTQKYAM (147 aa)) enclose the UBC core domain. Catalysis depends on cysteine 85, which acts as the Glycyl thioester intermediate.

It belongs to the ubiquitin-conjugating enzyme family. Interacts with SCF (SKP1-CUL1-F-box protein) E3 ubiquitin ligase complex. Interacts with CNOT4 (via RING domain). Interacts with E3 ubiquitin-protein ligases CBLC, PJA1 and PJA2. Interacts with PDZRN3. Interacts with PPP1R11. Interacts with E3 ubiquitin-protein ligase PHF7; the interaction inhibits cleavage of PHF7 and promotes association of the complex with the nucleosome core particle.

It carries out the reaction S-ubiquitinyl-[E1 ubiquitin-activating enzyme]-L-cysteine + [E2 ubiquitin-conjugating enzyme]-L-cysteine = [E1 ubiquitin-activating enzyme]-L-cysteine + S-ubiquitinyl-[E2 ubiquitin-conjugating enzyme]-L-cysteine.. It catalyses the reaction S-ubiquitinyl-[E1 ubiquitin-activating enzyme]-L-cysteine + [acceptor protein]-L-lysine = [E1 ubiquitin-activating enzyme]-L-cysteine + N(6)-monoubiquitinyl-[acceptor protein]-L-lysine.. It functions in the pathway protein modification; protein ubiquitination. Its function is as follows. Accepts ubiquitin from the E1 complex and catalyzes its covalent attachment to other proteins. In vitro catalyzes 'Lys-48'-linked polyubiquitination. Mediates the selective degradation of short-lived and abnormal proteins. Functions in the E6/E6-AP-induced ubiquitination of p53/TP53. Mediates ubiquitination of PEX5 and SQSTM1 and autoubiquitination of STUB1 and TRAF6. Involved in the signal-induced conjugation and subsequent degradation of NFKBIA, FBXW2-mediated GCM1 ubiquitination and degradation, MDM2-dependent degradation of p53/TP53 and the activation of MAVS in the mitochondria by RIGI in response to viral infection. Essential for viral activation of IRF3. The protein is Ubiquitin-conjugating enzyme E2 D2 (UBE2D2) of Sus scrofa (Pig).